The chain runs to 278 residues: Release factor glutamine methyltransferase (278 aa).

Residues 120-124 (GTGTG), Asp-143, and Asn-184 contribute to the S-adenosyl-L-methionine site. 184 to 187 (NPPY) contributes to the substrate binding site.

The protein belongs to the protein N5-glutamine methyltransferase family. PrmC subfamily.

The catalysed reaction is L-glutaminyl-[peptide chain release factor] + S-adenosyl-L-methionine = N(5)-methyl-L-glutaminyl-[peptide chain release factor] + S-adenosyl-L-homocysteine + H(+). Methylates the class 1 translation termination release factors RF1/PrfA and RF2/PrfB on the glutamine residue of the universally conserved GGQ motif. This is Release factor glutamine methyltransferase from Deinococcus radiodurans (strain ATCC 13939 / DSM 20539 / JCM 16871 / CCUG 27074 / LMG 4051 / NBRC 15346 / NCIMB 9279 / VKM B-1422 / R1).